A 247-amino-acid chain; its full sequence is 5'-nucleotidase SurE (247 aa).

The a divalent metal cation site is built by Asp8, Asp9, Ser39, and Asn91.

This sequence belongs to the SurE nucleotidase family. A divalent metal cation is required as a cofactor.

It localises to the cytoplasm. The catalysed reaction is a ribonucleoside 5'-phosphate + H2O = a ribonucleoside + phosphate. Nucleotidase that shows phosphatase activity on nucleoside 5'-monophosphates. The chain is 5'-nucleotidase SurE from Ruthia magnifica subsp. Calyptogena magnifica.